Reading from the N-terminus, the 165-residue chain is Adenosine 5'-monophosphoramidase HINT3 (165 aa).

A disordered region spans residues 1-23 (MAEKQAGLVGEPDPEGSSPGTSE). Alanine 2 carries the post-translational modification N-acetylalanine. The HIT domain maps to 32–143 (VFCRVAAGQE…PVKEFGFLSK (112 aa)). Residues 59–60 (DI) and 128–130 (HLH) each bind AMP. The short motif at 126–130 (HLHLH) is the Histidine triad motif element. The active-site Tele-AMP-histidine intermediate is histidine 128.

This sequence belongs to the HINT family. In terms of assembly, forms dimers to octamers and even larger oligomer. Interacts with CALM1.

The protein localises to the cytoplasm. It localises to the nucleus. It catalyses the reaction adenosine 5'-phosphoramidate + H2O = AMP + NH4(+). In terms of biological role, exhibits adenosine 5'-monophosphoramidase activity, hydrolyzing purine nucleotide phosphoramidates with a single phosphate group such as adenosine 5'monophosphoramidate (AMP-NH2) to yield AMP and NH2. Hydrolyzes lysyl-AMP (AMP-N-epsilon-(N-alpha-acetyl lysine methyl ester)) generated by lysine tRNA ligase. The chain is Adenosine 5'-monophosphoramidase HINT3 (Hint3) from Mus musculus (Mouse).